Reading from the N-terminus, the 427-residue chain is Trigger factor (427 aa).

One can recognise a PPIase FKBP-type domain in the interval 163-248; that stretch reads GDTVVIDFVG…IHEVKTKEVP (86 aa).

Belongs to the FKBP-type PPIase family. Tig subfamily.

It is found in the cytoplasm. It carries out the reaction [protein]-peptidylproline (omega=180) = [protein]-peptidylproline (omega=0). In terms of biological role, involved in protein export. Acts as a chaperone by maintaining the newly synthesized protein in an open conformation. Functions as a peptidyl-prolyl cis-trans isomerase. This chain is Trigger factor, found in Streptococcus agalactiae serotype V (strain ATCC BAA-611 / 2603 V/R).